The primary structure comprises 237 residues: Ribonuclease PH (237 aa).

Residues Arg86 and 124 to 126 (GTR) each bind phosphate.

The protein belongs to the RNase PH family. In terms of assembly, homohexameric ring arranged as a trimer of dimers.

The catalysed reaction is tRNA(n+1) + phosphate = tRNA(n) + a ribonucleoside 5'-diphosphate. In terms of biological role, phosphorolytic 3'-5' exoribonuclease that plays an important role in tRNA 3'-end maturation. Removes nucleotide residues following the 3'-CCA terminus of tRNAs; can also add nucleotides to the ends of RNA molecules by using nucleoside diphosphates as substrates, but this may not be physiologically important. Probably plays a role in initiation of 16S rRNA degradation (leading to ribosome degradation) during starvation. In Shewanella sediminis (strain HAW-EB3), this protein is Ribonuclease PH.